Reading from the N-terminus, the 333-residue chain is Ferrochelatase (333 aa).

Residues H202 and E284 each coordinate Fe cation.

This sequence belongs to the ferrochelatase family.

The protein resides in the cytoplasm. The enzyme catalyses heme b + 2 H(+) = protoporphyrin IX + Fe(2+). It functions in the pathway porphyrin-containing compound metabolism; protoheme biosynthesis; protoheme from protoporphyrin-IX: step 1/1. Functionally, catalyzes the ferrous insertion into protoporphyrin IX. The protein is Ferrochelatase of Francisella tularensis subsp. novicida (strain U112).